The following is a 274-amino-acid chain: Large ribosomal subunit protein uL2c (274 aa).

The disordered stretch occupies residues 230–252 (HPHGGGEGRSPIGRSKPLTPWGK).

This sequence belongs to the universal ribosomal protein uL2 family. In terms of assembly, part of the 50S ribosomal subunit.

The protein localises to the plastid. The polypeptide is Large ribosomal subunit protein uL2c (rpl2) (Euglena longa (Euglenophycean alga)).